Here is a 1868-residue protein sequence, read N- to C-terminus: Dedicator of cytokinesis protein 5 (1868 aa).

The SH3 domain occupies 8 to 69 (KRQKYGVAIY…PETYIHLKEA (62 aa)). Position 365 is a phosphoserine (Ser365). The 185-residue stretch at 443–627 (RNDIYVTLIH…DSFQIATLIC (185 aa)) folds into the C2 DOCK-type domain. Lys818 is modified (N6-acetyllysine). The 412-residue stretch at 1231–1642 (YKDKKREDIY…VEKLYGVITL (412 aa)) folds into the DOCKER domain. Residues 1681–1692 (STSSNSSDNASS) are compositionally biased toward low complexity. 2 disordered regions span residues 1681-1730 (STSS…RISK) and 1742-1868 (QVIA…PGSQ). Basic and acidic residues predominate over residues 1704-1728 (LFERRASSGARVEDLPPKEDSENRI). Residues Ser1755, Ser1765, Ser1771, Ser1784, and Ser1788 each carry the phosphoserine modification. Thr1793 bears the Phosphothreonine mark. Positions 1796-1810 (ATRTLSSPSLQTDGL) are enriched in polar residues. Phosphoserine occurs at positions 1832 and 1867.

Belongs to the DOCK family. As to quaternary structure, interacts with CRK and CRKL. Interacts (via N-terminus) with tensin TNS3 (via N-terminus); the interaction increases DOCK5 guanine nucleotide exchange activity towards Rac. Interacts with ELMO1. In terms of tissue distribution, highly expressed in lens, where it predominantly localizes to anterior epithelial cells, and is weakly expressed in lens fiber (at protein level). Expressed in brain, eye, lung, spleen and kidney, but not in thymus or peripheral blood leukocytes.

It localises to the cytoplasm. It is found in the cell membrane. Its subcellular location is the cell projection. The protein localises to the podosome. In terms of biological role, guanine nucleotide exchange factor (GEF) for Rho and Rac. GEF proteins activate small GTPases by exchanging bound GDP for free GTP. Along with DOCK1, mediates CRK/CRKL regulation of epithelial and endothelial cell spreading and migration on type IV collagen. This Mus musculus (Mouse) protein is Dedicator of cytokinesis protein 5.